The chain runs to 467 residues: Asparagine--tRNA ligase (467 aa).

The protein belongs to the class-II aminoacyl-tRNA synthetase family. As to quaternary structure, homodimer.

The protein localises to the cytoplasm. It carries out the reaction tRNA(Asn) + L-asparagine + ATP = L-asparaginyl-tRNA(Asn) + AMP + diphosphate + H(+). The protein is Asparagine--tRNA ligase of Baumannia cicadellinicola subsp. Homalodisca coagulata.